A 122-amino-acid polypeptide reads, in one-letter code: Small ribosomal subunit protein uS13 (122 aa).

The disordered stretch occupies residues 93–122 (RRGLPVRGQKTKTNARTRKGPKKTMANKKK).

It belongs to the universal ribosomal protein uS13 family. In terms of assembly, part of the 30S ribosomal subunit. Forms a loose heterodimer with protein S19. Forms two bridges to the 50S subunit in the 70S ribosome.

Located at the top of the head of the 30S subunit, it contacts several helices of the 16S rRNA. In the 70S ribosome it contacts the 23S rRNA (bridge B1a) and protein L5 of the 50S subunit (bridge B1b), connecting the 2 subunits; these bridges are implicated in subunit movement. Contacts the tRNAs in the A and P-sites. This chain is Small ribosomal subunit protein uS13, found in Clostridium botulinum (strain Alaska E43 / Type E3).